The chain runs to 1090 residues: RNA-directed RNA polymerase (1090 aa).

The region spanning 506–678 (LSYGDVTRYL…ALASLTGCEI (173 aa)) is the RdRp catalytic domain.

It belongs to the reoviridae RNA-directed RNA polymerase family. As to quaternary structure, interacts with VP3 (Potential). Interacts with VP2; this interaction activates VP1. Interacts with NSP5; this interaction is probably necessary for the formation of functional virus factories. Interacts with NSP2; this interaction is weak. Mg(2+) serves as cofactor.

Its subcellular location is the virion. The enzyme catalyses RNA(n) + a ribonucleoside 5'-triphosphate = RNA(n+1) + diphosphate. RNA-directed RNA polymerase that is involved in both transcription and genome replication. Together with VP3 capping enzyme, forms an enzyme complex positioned near the channels situated at each of the five-fold vertices of the core. Following infection, the outermost layer of the virus is lost, leaving a double-layered particle (DLP) made up of the core and VP6 shell. VP1 then catalyzes the transcription of fully conservative plus-strand genomic RNAs that are extruded through the DLP's channels into the cytoplasm where they function as mRNAs for translation of viral proteins. One copy of each of the viral (+)RNAs is also recruited during core assembly, together with newly synthesized polymerase complexes and VP2. The polymerase of these novo-formed particles catalyzes the synthesis of complementary minus-strands leading to dsDNA formation. To do so, the polymerase specifically recognizes conserved 3' sequence(s) in plus-strand RNA templates. Once dsRNA synthesis is complete, the polymerase switches to the transcriptional mode, thus providing secondary transcription. In Rotavirus C (isolate RVC/Human/United Kingdom/Bristol/1989) (RV-C), this protein is RNA-directed RNA polymerase.